Consider the following 870-residue polypeptide: DNA mismatch repair protein MutS (870 aa).

622-629 (GPNMGGKS) provides a ligand contact to ATP.

It belongs to the DNA mismatch repair MutS family.

Its function is as follows. This protein is involved in the repair of mismatches in DNA. It is possible that it carries out the mismatch recognition step. This protein has a weak ATPase activity. The polypeptide is DNA mismatch repair protein MutS (Methylibium petroleiphilum (strain ATCC BAA-1232 / LMG 22953 / PM1)).